A 178-amino-acid polypeptide reads, in one-letter code: Deoxycytidylate deaminase (178 aa).

Residues 14-146 (EWPEYFMAVA…EATAARLLFD (133 aa)) form the CMP/dCMP-type deaminase domain. Histidine 84 lines the Zn(2+) pocket. The active-site Proton donor is the glutamate 86. 2 residues coordinate Zn(2+): cysteine 110 and cysteine 113. Serine 174 bears the Phosphoserine mark.

The protein belongs to the cytidine and deoxycytidylate deaminase family. In terms of assembly, homohexamer. Zn(2+) is required as a cofactor.

It carries out the reaction dCMP + H2O + H(+) = dUMP + NH4(+). It catalyses the reaction 5-hydroxymethyl-dCMP + H2O + H(+) = 5-hydroxymethyl-dUMP + NH4(+). Allosteric enzyme whose activity is greatly influenced by the end products of its metabolic pathway, dCTP and dTTP. Catalyzes the deamination of dCMP to dUMP, providing the nucleoside monophosphate substrate for the thymidylate synthase/TYMS. Also, part of a nucleotide salvage pathway that eliminates epigenetically modified 5-hydroxymethyl-dCMP (hmdCMP) in a two-step process entailing deamination to cytotoxic 5-hydroxymethyl-dUMP (hmdUMP), followed by its hydrolysis into 5-hydroxymethyluracil (hmU) and 2-deoxy-D-ribose 5-phosphate (deoxyribosephosphate). Catalyzes the first step in that pathway, the deamination of 5-hydroxymethyl-dCMP (hmdCMP). This Pongo abelii (Sumatran orangutan) protein is Deoxycytidylate deaminase.